A 2793-amino-acid polypeptide reads, in one-letter code: MTRASASGSGHEASTVFLFGPHVGTFTKASMDKLVRPLSQSPQRDWILRTIADLPTYWDALAAKMPDIARDIDGPTSLSELDRWLRHSLDTAGLSVSDDESLPSILVGPLVVLIQLTQYWRHLEMIRDGSAPAVDLQAELVQQTQSGSRPTVILGFCAGLLAALSVASARNQAGFEEYGAVAVRLAMLIGALIDAQEVWDKASGKGSSASYAVAWRGQKQEDEMNRIIGDLSNDAYVAVRYDQARATVTASETIAPLLMKRLRAAGVTVAEVGIKGQIHSPNADRKQHTNALVELCASLPGLQYAEVSKLALQTYDNQGSGIPVSGSGNMTEMVVRSILVQQCRWFDTFSAVADALPDPYVVTFGLERCVPPTLMRTLGGRQVFYEDLPKDPEKPSFWLTPQSSPPPQPQLQPVLQLQQQQTTRVEPVMPVSPQSEPIAIVGMSVKTAGADDLDEFVAMLKTGQSQHIPITRDRLMHDMLFRENADADPKRKFYGCFFRDGDAFDHKFFKRSPRESAAMDPQSRIVLQAAYQAVEQSGYFVEDHNGYTPDGRDKMHVGVYLGSCGVDYEHNISCYDPNAFTATGALKSFITGRVSHHFGWTGPCMTFDTACSSSAVAIHTACRNLLSGECTAALAGGSNTVTNMNWFQNLAAGSFVSPTGQCKPFDDDADGYCRAEGAAFVYLKRLSDALRDGNQVIATIAASAVYQNENCTPLFVPNSPSLSHLFKDVMRQAKVTANDVSLVEAHGTGTPVGDPAEYESILAALGGPSRKKKLPIGSVKGHIGHTEGASGAIALVKIIMMMREGFIPPQASFKTMNKKIPVKADDNIEVVTRLRAWEEERKTALLNNYGACGSNASMIVTQPDLRGPHSRSHAVAGARYPFWIPGLDTRAITAYCAKLGPWLRSRAEEPTLADISFNLSRQSNRGLPQGFIFNARSLAELHEKIEQAVAAAPSSKDAAASVGIAPVKAERPVILCFGGQISRFVGLDRGLFDAVALFRKHLDAVDTVVKAQGLVSIYAAPDIFSREPIEDTVKLQTMLFAMQYACAQTWIDCGLNGKVQALVGHSFGEITALCVAGTLSLDETVRLVAARAKLVRDSWGADRGAMMALEGDEGLVHQLLSEANGASGSDGSASIACYNGPRSFTIAGSTSAVDQVQQTISRPEFGSIKGKRLNVTNAFHSSLVDKISDGLDSIGKTLTFNSPLIPVERATEVASARATDASFVSQHMRQPVFFNHAVQRLAKRHPQAIFLEAGSSSTITVMAGRAIAQGQASSESHYFQAVSITNETALDSLADTTTALWKQGLRVTFWAHDAVQTAEYAHLLLPPYQFDTSSRHWLPMKSPVEKVKEAALALIAANGGSLAGAGLQGQQAGTPQDPRTLPVWEFVGYQDDETRQARFRVNTSADKYNRYVLSHVIAQTAPICPGTLECDIVIEALFSLEPGWRQDGVQPVVREMINHSPICKDPSRVVYLDLTATNKRRTNWTVRIFSLDDDATKKTPEIHAEATVEMRSSSDQAHVREFANFERLVSHKQCTDLLRLSLDQDTDEGVEVLQGRNVYRAFSSIVDYGEVYRGVKYVVGKGTECAGRVQLPRSSRGDTWLDVPLSDSFSQVGGVWVNLMTDLPSSDMFIATGCELSMRSPRAPPREDADVWHVYARHSRQGDKAIMTDLFVFDAVSGQLVEIMLGVQYMRVAKASMSMMLARMTKDDSVLRTKALVPGPTPAAAFQAALKTAPEVRASSEPGAKVKASKTSKKEKKEKKPVTKAKSKSSKPSGWRDITEEVRNLVATVSGIDASELELDAEMADFGIDSLMGMELGKEVEAAFKCTLDQNEQMEATSLRKFVQCVSNALFGPNAGPAEAEDDEDEEKSDNSSSESASESDDAGSESSDTGILTPTGEEEQPLPLKAVAIHKSAGLAAIAPPVESRLALSSSDILASFGQVKMQTDTLMKEYGVDKTEGVMLSGSNRLCTALVVEAMDELGCPLRTASPGQPLARVAFLPQHGRLMQWVYEFLERDARLINIDPASGQITRTHITAPRKTSQVILQEVLASDPGFAVPNRLAYYAGQQLAGVLSGSTDGIRVLFGSPEGRELTAAMYCEHTFNCMSYAQMREVTNLLAERIGRTGETLKVLEMGAGTGGTTLIMAPFLATLAESGALPIEYTFTDISPSMVANARRRFSKQYPFMRFAVHDIEKPPADELRNQHLVLASNAIHATHNLGVSLSNIHQALRPDGFLMMLEMTEVVPFVDLVFGLLEGWWLFDDGRHHAVVPAEHWESELHRAGFGHVDWTDGNLPENTFQKVIIALASGAQGARLPKPGPVQTLIPELNRENVEARTATAESLVAKYTAGWETPKLRALASRAEKESGKTQAPHAAPGRRAHEAVVIVTGATGSLGSHIVQRLAETPSVATVVCLNRRSSSTTPEKRQQAALTARGITLSPGARAKLRVLETDTSKPQLGLPPLEYGWLLENATDIIHNAWPMSGTRPVSAFEPQLQAMRNLLDLARDIAERPFNGSSRVGFQFISSIGVVGFCGQSRVSEDRVPLSAALPSGYGEAKWICERMVDETLHRHPGLFRAMVVRPGQISGSSTSGFWNPVEHFAFLVKSSQSLRAWPDLQGQMQWIPVDYCAAGVVDLLHLTSRGDEAYPVYHMDNPVGQNWQAMNHVLASALDIPASNIIPFKTWISRVRRSPLPMETENPAARLVDFLDDHFERMSCGGLVLDTSKAKEHSTTMAGVGPVGTELARLQYQARSSLLISLEKLQCVYHSVANYSVLVTMGLRRRSSIATPYTPQI.

The N-terminal acylcarrier protein transacylase domain (SAT) stretch occupies residues 1 to 401; that stretch reads MTRASASGSG…PEKPSFWLTP (401 aa). The active-site Nucleophile; for transacylase activity is C157. Catalysis depends on H279, which acts as the Proton donor/acceptor; for transacylase activity. The Ketosynthase family 3 (KS3) domain maps to 435-862; the sequence is SEPIAIVGMS…GSNASMIVTQ (428 aa). Active-site for beta-ketoacyl synthase activity residues include C611, H746, and H785. The segment at 977–1265 is malonyl-CoA:ACP transacylase (MAT); it reads FGGQISRFVG…SSTITVMAGR (289 aa). The interval 1384–1515 is N-terminal hotdog fold; sequence WEFVGYQDDE…ATVEMRSSSD (132 aa). Residues 1384–1698 enclose the PKS/mFAS DH domain; it reads WEFVGYQDDE…YMRVAKASMS (315 aa). The product template (PT) domain stretch occupies residues 1411-1696; it reads YVLSHVIAQT…VQYMRVAKAS (286 aa). The Proton acceptor; for dehydratase activity role is filled by H1415. Residues 1550 to 1698 are C-terminal hotdog fold; sequence VEVLQGRNVY…YMRVAKASMS (149 aa). D1607 (proton donor; for dehydratase activity) is an active-site residue. Positions 1734–1776 are disordered; sequence PEVRASSEPGAKVKASKTSKKEKKEKKPVTKAKSKSSKPSGWR. Residues 1747–1769 show a composition bias toward basic residues; that stretch reads KASKTSKKEKKEKKPVTKAKSKS. A Carrier domain is found at 1776–1850; that stretch reads RDITEEVRNL…KFVQCVSNAL (75 aa). Residue S1810 is modified to O-(pantetheine 4'-phosphoryl)serine. Positions 1853-1903 are disordered; the sequence is PNAGPAEAEDDEDEEKSDNSSSESASESDDAGSESSDTGILTPTGEEEQPL. The segment covering 1859 to 1868 has biased composition (acidic residues); that stretch reads EAEDDEDEEK. Residues 2115 to 2294 form a methyltransferase domain region; sequence NLLAERIGRT…HVDWTDGNLP (180 aa). The disordered stretch occupies residues 2360 to 2379; sequence SRAEKESGKTQAPHAAPGRR. The segment at 2387–2630 is NADPH-binding domain; it reads VTGATGSLGS…QWIPVDYCAA (244 aa).

Pantetheine 4'-phosphate is required as a cofactor.

The catalysed reaction is (3E,5E,7S)-5,7-dimethyl-2-oxonona-3,5-dienyl-[ACP] + 4 malonyl-CoA + AH2 + S-adenosyl-L-methionine + 3 H(+) = 6-[(3E,5E,7S)-5,7-dimethyl-2-oxonona-3,5-dienyl]-2,4-dihydroxy-3-methylbenzaldehyde + holo-[ACP] + A + S-adenosyl-L-homocysteine + 4 CO2 + 4 CoA + H2O. It participates in secondary metabolite biosynthesis. Functionally, iterative polyketide synthase; part of the gene cluster that mediates the biosynthesis of asperfuranone, a probable antitumor agent. The polyketide synthase afoG is responsible for producing the 3,5-dimethyloctadienone moiety from acetyl-CoA, three malonyl-CoA, and two S-adenosyl methionines (SAM). The 3,5-dimethyloctadienone moiety is then loaded onto the SAT domain of afoE and extended with four malonyl-CoA and one SAM, which leads to the formation of 2,4-dihydroxy-6-(5,7-dimethyl-2-oxo-trans-3-trans-5-nonadienyl)-3-methylbenzaldehyde (compound 2) after reductive release and aldol condensation. AfoD is the next enzyme in the biosynthesis sequence and hydroxylates the side chain at the benzylic position of compound 2. After benzylic hydroxylation, a furan ring is formed after five-member ring hemiacetal formation and water elimination. AfoF and afoC are proposed to oxidize the R-diketone proton and to reduce the unconjugated carbonyl group, respectively, to generate asperfuranone. Since no intermediates could be isolated from afoF and afoC deletants, the sequence of these two enzymes is not fully understood. Moreover, since afoC deletant still produces a small amount of asperfuranone, other endogenous oxidoreductases might catalyze the same reaction with much less efficiency. The protein is Iterative polyketide synthase afoE of Emericella nidulans (strain FGSC A4 / ATCC 38163 / CBS 112.46 / NRRL 194 / M139) (Aspergillus nidulans).